A 138-amino-acid polypeptide reads, in one-letter code: MHFTLFLYFDAIRHANQRRWCHECTIKIFRRSFDIARHTVHLCVRKIFSLHPLTETDFLPNELRSEEDQTLIGIFWFLPPIIEGEDERSRFPRRSMSENHLIITKKSLHNVASKDYIRGSHVPCFQPYEDVYELNIEE.

This is an uncharacterized protein from Schizosaccharomyces pombe (strain 972 / ATCC 24843) (Fission yeast).